The following is a 49-amino-acid chain: Osteocalcin (49 aa).

Positions 1–47 constitute a Gla domain; that stretch reads YLDPGLGAPAPYPDPLEPKREVCELNPDCDELADHIGFQEAYRRFYG. At P9 the chain carries Hydroxyproline. Positions 17, 21, 24, and 30 each coordinate Ca(2+). 3 positions are modified to 4-carboxyglutamate: E17, E21, and E24. C23 and C29 are disulfide-bonded.

This sequence belongs to the osteocalcin/matrix Gla protein family. In terms of processing, gamma-carboxyglutamate residues are formed by vitamin K dependent carboxylation by GGCX. These residues are essential for the binding of calcium. Decarboxylation promotes the hormone activity.

It is found in the secreted. In terms of biological role, the carboxylated form is one of the main organic components of the bone matrix, which constitutes 1-2% of the total bone protein. It acts as a negative regulator of bone formation and is required to limit bone formation without impairing bone resorption or mineralization. The carboxylated form binds strongly to apatite and calcium. Functionally, the uncarboxylated form acts as a hormone secreted by osteoblasts, which regulates different cellular processes, such as energy metabolism, male fertility and brain development. Regulates of energy metabolism by acting as a hormone favoring pancreatic beta-cell proliferation, insulin secretion and sensitivity and energy expenditure. Uncarboxylated osteocalcin hormone also promotes testosterone production in the testes: acts as a ligand for G protein-coupled receptor GPRC6A at the surface of Leydig cells, initiating a signaling response that promotes the expression of enzymes required for testosterone synthesis in a CREB-dependent manner. Also acts as a regulator of brain development: osteocalcin hormone crosses the blood-brain barrier and acts as a ligand for GPR158 on neurons, initiating a signaling response that prevents neuronal apoptosis in the hippocampus, favors the synthesis of all monoamine neurotransmitters and inhibits that of gamma-aminobutyric acid (GABA). Osteocalcin also crosses the placenta during pregnancy and maternal osteocalcin is required for fetal brain development. This chain is Osteocalcin (BGLAP), found in Capra hircus (Goat).